The primary structure comprises 411 residues: Serine hydroxymethyltransferase (411 aa).

120–122 contacts (6S)-5,6,7,8-tetrahydrofolate; it reads GHL. At Lys225 the chain carries N6-(pyridoxal phosphate)lysine. Residue 350-352 participates in (6S)-5,6,7,8-tetrahydrofolate binding; sequence SPF.

It belongs to the SHMT family. Homodimer. Pyridoxal 5'-phosphate is required as a cofactor.

Its subcellular location is the cytoplasm. It catalyses the reaction (6R)-5,10-methylene-5,6,7,8-tetrahydrofolate + glycine + H2O = (6S)-5,6,7,8-tetrahydrofolate + L-serine. Its pathway is one-carbon metabolism; tetrahydrofolate interconversion. It functions in the pathway amino-acid biosynthesis; glycine biosynthesis; glycine from L-serine: step 1/1. Its function is as follows. Catalyzes the reversible interconversion of serine and glycine with tetrahydrofolate (THF) serving as the one-carbon carrier. This reaction serves as the major source of one-carbon groups required for the biosynthesis of purines, thymidylate, methionine, and other important biomolecules. Also exhibits THF-independent aldolase activity toward beta-hydroxyamino acids, producing glycine and aldehydes, via a retro-aldol mechanism. In Limosilactobacillus reuteri (strain DSM 20016) (Lactobacillus reuteri), this protein is Serine hydroxymethyltransferase.